The sequence spans 213 residues: ATP-dependent Clp protease proteolytic subunit (213 aa).

Residue S114 is the Nucleophile of the active site. Residue H139 is part of the active site.

Belongs to the peptidase S14 family. In terms of assembly, fourteen ClpP subunits assemble into 2 heptameric rings which stack back to back to give a disk-like structure with a central cavity, resembling the structure of eukaryotic proteasomes.

The protein resides in the cytoplasm. The enzyme catalyses Hydrolysis of proteins to small peptides in the presence of ATP and magnesium. alpha-casein is the usual test substrate. In the absence of ATP, only oligopeptides shorter than five residues are hydrolyzed (such as succinyl-Leu-Tyr-|-NHMec, and Leu-Tyr-Leu-|-Tyr-Trp, in which cleavage of the -Tyr-|-Leu- and -Tyr-|-Trp bonds also occurs).. Functionally, cleaves peptides in various proteins in a process that requires ATP hydrolysis. Has a chymotrypsin-like activity. Plays a major role in the degradation of misfolded proteins. The chain is ATP-dependent Clp protease proteolytic subunit from Methylobacillus flagellatus (strain ATCC 51484 / DSM 6875 / VKM B-1610 / KT).